Consider the following 945-residue polypeptide: Isoleucine--tRNA ligase (945 aa).

The short motif at 66–76 (PYANGDIHLGH) is the 'HIGH' region element. Glutamate 581 contributes to the L-isoleucyl-5'-AMP binding site. The short motif at 622–626 (KMSKS) is the 'KMSKS' region element. Position 625 (lysine 625) interacts with ATP. The Zn(2+) site is built by cysteine 908, cysteine 911, cysteine 928, and cysteine 931.

The protein belongs to the class-I aminoacyl-tRNA synthetase family. IleS type 1 subfamily. In terms of assembly, monomer. The cofactor is Zn(2+).

The protein resides in the cytoplasm. It carries out the reaction tRNA(Ile) + L-isoleucine + ATP = L-isoleucyl-tRNA(Ile) + AMP + diphosphate. Functionally, catalyzes the attachment of isoleucine to tRNA(Ile). As IleRS can inadvertently accommodate and process structurally similar amino acids such as valine, to avoid such errors it has two additional distinct tRNA(Ile)-dependent editing activities. One activity is designated as 'pretransfer' editing and involves the hydrolysis of activated Val-AMP. The other activity is designated 'posttransfer' editing and involves deacylation of mischarged Val-tRNA(Ile). The sequence is that of Isoleucine--tRNA ligase from Paraburkholderia xenovorans (strain LB400).